A 534-amino-acid chain; its full sequence is CTP synthase (534 aa).

The amidoligase domain stretch occupies residues 1–266; that stretch reads MKTKFLFITG…DERIIDYLNI (266 aa). Ser14 lines the CTP pocket. Ser14 contributes to the UTP binding site. ATP-binding positions include 15-20 and Asp72; that span reads SLGKGL. Residues Asp72 and Glu140 each coordinate Mg(2+). CTP contacts are provided by residues 147-149, 187-192, and Lys223; these read DIE and KTKPTQ. Residues 187–192 and Lys223 contribute to the UTP site; that span reads KTKPTQ. 239-241 serves as a coordination point for ATP; that stretch reads RDV. The Glutamine amidotransferase type-1 domain maps to 291-533; the sequence is TIAIVGKYVE…VGASLKHHGE (243 aa). Residue Gly353 coordinates L-glutamine. Cys380 (nucleophile; for glutamine hydrolysis) is an active-site residue. Residues 381–384, Glu404, and Arg461 each bind L-glutamine; that span reads LGMQ. Active-site residues include His506 and Glu508.

Belongs to the CTP synthase family. As to quaternary structure, homotetramer.

It catalyses the reaction UTP + L-glutamine + ATP + H2O = CTP + L-glutamate + ADP + phosphate + 2 H(+). It carries out the reaction L-glutamine + H2O = L-glutamate + NH4(+). The enzyme catalyses UTP + NH4(+) + ATP = CTP + ADP + phosphate + 2 H(+). It participates in pyrimidine metabolism; CTP biosynthesis via de novo pathway; CTP from UDP: step 2/2. Its activity is regulated as follows. Allosterically activated by GTP, when glutamine is the substrate; GTP has no effect on the reaction when ammonia is the substrate. The allosteric effector GTP functions by stabilizing the protein conformation that binds the tetrahedral intermediate(s) formed during glutamine hydrolysis. Inhibited by the product CTP, via allosteric rather than competitive inhibition. In terms of biological role, catalyzes the ATP-dependent amination of UTP to CTP with either L-glutamine or ammonia as the source of nitrogen. Regulates intracellular CTP levels through interactions with the four ribonucleotide triphosphates. In Syntrophotalea carbinolica (strain DSM 2380 / NBRC 103641 / GraBd1) (Pelobacter carbinolicus), this protein is CTP synthase.